The chain runs to 857 residues: Phosphoenolpyruvate carboxylase (857 aa).

Active-site residues include histidine 144 and lysine 530.

It belongs to the PEPCase type 1 family. In terms of assembly, homotetramer. Requires Mg(2+) as cofactor. The N-terminus is blocked.

The enzyme catalyses oxaloacetate + phosphate = phosphoenolpyruvate + hydrogencarbonate. Forms oxaloacetate, a four-carbon dicarboxylic acid source for the tricarboxylic acid cycle. The sequence is that of Phosphoenolpyruvate carboxylase (ppc) from Thermus sp. (strain 71).